Reading from the N-terminus, the 107-residue chain is Ig kappa chain V-VI region XRPC 44 (107 aa).

The tract at residues 1-23 (EIVLTQSPAITAASLGQKVTITC) is framework-1. Residues C23 and C87 are joined by a disulfide bond. Residues 24 to 33 (SASSSVSYMH) are complementarity-determining-1. The interval 34–48 (WYQQKSGTSPKPWIY) is framework-2. A complementarity-determining-2 region spans residues 49–55 (EISKLAS). Positions 56 to 87 (GVPARFSGSGSGTSYSLTISSMEAEDAAIYYC) are framework-3. The interval 88 to 96 (QQWNYPLWT) is complementarity-determining-3. Residues 97–106 (FGGGTKLEIK) are framework-4.

The polypeptide is Ig kappa chain V-VI region XRPC 44 (Mus musculus (Mouse)).